Here is a 124-residue protein sequence, read N- to C-terminus: Fluoride-specific ion channel FluC (124 aa).

4 helical membrane passes run 5-25 (FLQV…VNIL), 35-55 (LGTL…AALL), 63-83 (LAPF…AFAL), and 98-118 (LGYV…GLTV). Na(+) contacts are provided by glycine 73 and threonine 76.

Belongs to the fluoride channel Fluc/FEX (TC 1.A.43) family.

Its subcellular location is the cell inner membrane. It catalyses the reaction fluoride(in) = fluoride(out). With respect to regulation, na(+) is not transported, but it plays an essential structural role and its presence is essential for fluoride channel function. In terms of biological role, fluoride-specific ion channel. Important for reducing fluoride concentration in the cell, thus reducing its toxicity. The sequence is that of Fluoride-specific ion channel FluC from Paracoccus denitrificans (strain Pd 1222).